A 259-amino-acid polypeptide reads, in one-letter code: MKVLLTNDDGIYAPGIFAMAKEIASRDEFEAVVVAPDREQSATGHAITVHKPLRVNNVKKLGEKLEIPFYSVNGTPSDCVKLAVESVMDEKPDLVISGINRGANLGTDVLYSGTVSGAMEAAILNIKSIAVSLVDYDYEDYSTAASYTAYIANIIKDNPEEFENGTLLNVNVPAVEANQLKGVKITRQGFRQYENIFEKRFDPRGKAYYWMAGKVIEDTSDIKTDVASVKENYVSVTPIKYDLTDYNLYNSLSNWEFDD.

A divalent metal cation contacts are provided by Asp8, Asp9, Ser41, and Asn100.

It belongs to the SurE nucleotidase family. A divalent metal cation is required as a cofactor.

Its subcellular location is the cytoplasm. The enzyme catalyses a ribonucleoside 5'-phosphate + H2O = a ribonucleoside + phosphate. Its function is as follows. Nucleotidase that shows phosphatase activity on nucleoside 5'-monophosphates. This is 5'-nucleotidase SurE from Natranaerobius thermophilus (strain ATCC BAA-1301 / DSM 18059 / JW/NM-WN-LF).